Here is a 255-residue protein sequence, read N- to C-terminus: Type III pantothenate kinase (255 aa).

Residue 6 to 13 coordinates ATP; it reads DIGNTNTV. Substrate-binding positions include Tyr100 and 107 to 110; that span reads GADR. Catalysis depends on Asp109, which acts as the Proton acceptor. Asp129 provides a ligand contact to K(+). Thr132 provides a ligand contact to ATP. Thr185 serves as a coordination point for substrate.

Belongs to the type III pantothenate kinase family. Homodimer. NH4(+) is required as a cofactor. K(+) serves as cofactor.

It localises to the cytoplasm. The catalysed reaction is (R)-pantothenate + ATP = (R)-4'-phosphopantothenate + ADP + H(+). The protein operates within cofactor biosynthesis; coenzyme A biosynthesis; CoA from (R)-pantothenate: step 1/5. Its function is as follows. Catalyzes the phosphorylation of pantothenate (Pan), the first step in CoA biosynthesis. In Desulfosudis oleivorans (strain DSM 6200 / JCM 39069 / Hxd3) (Desulfococcus oleovorans), this protein is Type III pantothenate kinase.